The chain runs to 280 residues: Energy-coupling factor transporter ATP-binding protein EcfA2 (280 aa).

Positions 3 to 245 constitute an ABC transporter domain; it reads IEFKNVSYTY…VELLESKQLG (243 aa). Residue 40 to 47 participates in ATP binding; the sequence is GHTGSGKS.

It belongs to the ABC transporter superfamily. Energy-coupling factor EcfA family. As to quaternary structure, forms a stable energy-coupling factor (ECF) transporter complex composed of 2 membrane-embedded substrate-binding proteins (S component), 2 ATP-binding proteins (A component) and 2 transmembrane proteins (T component).

It localises to the cell membrane. Functionally, ATP-binding (A) component of a common energy-coupling factor (ECF) ABC-transporter complex. Unlike classic ABC transporters this ECF transporter provides the energy necessary to transport a number of different substrates. The chain is Energy-coupling factor transporter ATP-binding protein EcfA2 from Streptococcus agalactiae serotype Ia (strain ATCC 27591 / A909 / CDC SS700).